Here is a 470-residue protein sequence, read N- to C-terminus: Serine carboxypeptidase ctsa-4.1 (470 aa).

A signal peptide spans 1-19 (MKLLSILFIFVSSYSFCLA). The N-linked (GlcNAc...) asparagine glycan is linked to N132. The active site involves S169. N316 is a glycosylation site (N-linked (GlcNAc...) asparagine). D380 is an active-site residue. Residue N396 is glycosylated (N-linked (GlcNAc...) asparagine). Residue H441 is part of the active site.

The protein belongs to the peptidase S10 family.

The enzyme catalyses Release of a C-terminal amino acid with broad specificity.. In Caenorhabditis elegans, this protein is Serine carboxypeptidase ctsa-4.1.